The primary structure comprises 371 residues: Anhydro-N-acetylmuramic acid kinase (371 aa).

10–17 (GTSLDGID) contributes to the ATP binding site.

The protein belongs to the anhydro-N-acetylmuramic acid kinase family.

The enzyme catalyses 1,6-anhydro-N-acetyl-beta-muramate + ATP + H2O = N-acetyl-D-muramate 6-phosphate + ADP + H(+). It functions in the pathway amino-sugar metabolism; 1,6-anhydro-N-acetylmuramate degradation. Its pathway is cell wall biogenesis; peptidoglycan recycling. Functionally, catalyzes the specific phosphorylation of 1,6-anhydro-N-acetylmuramic acid (anhMurNAc) with the simultaneous cleavage of the 1,6-anhydro ring, generating MurNAc-6-P. Is required for the utilization of anhMurNAc either imported from the medium or derived from its own cell wall murein, and thus plays a role in cell wall recycling. This Chromohalobacter salexigens (strain ATCC BAA-138 / DSM 3043 / CIP 106854 / NCIMB 13768 / 1H11) protein is Anhydro-N-acetylmuramic acid kinase.